The chain runs to 257 residues: Beta-fibrinogenase mucrofibrase-1 (257 aa).

The first 18 residues, 1 to 18 (MVLIRVLANLLILQLSYA), serve as a signal peptide directing secretion. The propeptide occupies 19–24 (QKSSEL). Residues 25–248 (VIGGDECNIN…HLDWIKGIIA (224 aa)) enclose the Peptidase S1 domain. Intrachain disulfides connect C31/C162, C49/C65, C97/C255, C141/C209, C173/C188, and C199/C224. Catalysis depends on charge relay system residues H64 and D109. The active-site Charge relay system is the S203.

It belongs to the peptidase S1 family. Snake venom subfamily. In terms of assembly, monomer. In terms of tissue distribution, expressed by the venom gland.

The protein localises to the secreted. In terms of biological role, snake venom serine protease with strong beta-fibrinogenolytic activities, angiotensin I (AGT)-degrading activities and strong kallikrein-like activities in vitro, releasing bradykinin from kininogen (KNG1). Intravenous injection strongly lowers blood pressure in experimental rats, which may be explained by the action on angiotensin I and kininogen. This Protobothrops mucrosquamatus (Taiwan habu) protein is Beta-fibrinogenase mucrofibrase-1.